Consider the following 1793-residue polypeptide: Transposon Ty1-H Gag-Pol polyprotein (1793 aa).

Composition is skewed to polar residues over residues 1-10 (MESQQLSNYP), 48-60 (TKANSQQTTTPAS), and 127-152 (QSQFPQYPSSVGTPLSTPSPESGNTF). Disordered regions lie at residues 1–84 (MESQ…QNGP), 126–174 (PQSQ…PPPM), and 390–459 (GSRN…SKST). A compositionally biased stretch (low complexity) spans 153–165 (TDSSSADSDMTST). Residues 337–439 (NNGIHINNKV…NSKSKTARAH (103 aa)) form an RNA-binding region. Over residues 440–456 (NVSTSNNSPSTDNDSIS) the composition is skewed to low complexity. Asp499 acts as the For protease activity; shared with dimeric partner in catalysis. The interval 621–678 (NVHTSESTRKYPYPFIHRMLAHANAQTIRYSLKNNTITYFNESDVDWSSAIDYQCPDC) is integrase-type zinc finger-like. The region spanning 698–873 (NSYEPFQYLH…AGLDISTLLP (176 aa)) is the Integrase catalytic domain. Residues Asp709 and Asp774 each coordinate Mg(2+). The tract at residues 996-1208 (AVSPTDSTPP…SSLGGIGDSN (213 aa)) is disordered. A compositionally biased stretch (low complexity) spans 998-1007 (SPTDSTPPST). The span at 1043-1053 (STPQISDIEST) shows a compositional bias: polar residues. Over residues 1076–1091 (ESSHASKSKDFRHSDS) the composition is skewed to basic and acidic residues. 2 stretches are compositionally biased toward polar residues: residues 1092 to 1120 (YSDNETNHTNVPISSTGGTNNKTVPQTSE) and 1133 to 1144 (SIDTSSSESNSL). The Bipartite nuclear localization signal motif lies at 1216 to 1250 (KKRSLEDNETEIKVSRDTWNTKNMRSLEPPRSKKR). One can recognise a Reverse transcriptase Ty1/copia-type domain in the interval 1376–1514 (NNYYITQLDI…DILGLEIKYQ (139 aa)). 6 residues coordinate Mg(2+): Asp1384, Asp1465, Asp1466, Asp1648, Glu1690, and Asp1723. The RNase H Ty1/copia-type domain maps to 1648–1790 (DASYGNQPYY…IKTFKLLTNK (143 aa)).

As to quaternary structure, the capsid protein forms a homotrimer, from which the VLPs are assembled. The protease is a homodimer, whose active site consists of two apposed aspartic acid residues. In terms of processing, initially, virus-like particles (VLPs) are composed of the structural unprocessed proteins Gag and Gag-Pol, and also contain the host initiator methionine tRNA (tRNA(i)-Met) which serves as a primer for minus-strand DNA synthesis, and a dimer of genomic Ty RNA. Processing of the polyproteins occurs within the particle and proceeds by an ordered pathway, called maturation. First, the protease (PR) is released by autocatalytic cleavage of the Gag-Pol polyprotein yielding capsid protein p45 and a Pol-p154 precursor protein. This cleavage is a prerequisite for subsequent processing of Pol-p154 at the remaining sites to release the mature structural and catalytic proteins. Maturation takes place prior to the RT reaction and is required to produce transposition-competent VLPs.

The protein localises to the cytoplasm. It localises to the nucleus. It carries out the reaction DNA(n) + a 2'-deoxyribonucleoside 5'-triphosphate = DNA(n+1) + diphosphate. The enzyme catalyses Endonucleolytic cleavage to 5'-phosphomonoester.. Capsid protein (CA) is the structural component of the virus-like particle (VLP), forming the shell that encapsulates the retrotransposons dimeric RNA genome. The particles are assembled from trimer-clustered units and there are holes in the capsid shells that allow for the diffusion of macromolecules. CA also has nucleocapsid-like chaperone activity, promoting primer tRNA(i)-Met annealing to the multipartite primer-binding site (PBS), dimerization of Ty1 RNA and initiation of reverse transcription. Functionally, the aspartyl protease (PR) mediates the proteolytic cleavages of the Gag and Gag-Pol polyproteins after assembly of the VLP. In terms of biological role, reverse transcriptase/ribonuclease H (RT) is a multifunctional enzyme that catalyzes the conversion of the retro-elements RNA genome into dsDNA within the VLP. The enzyme displays a DNA polymerase activity that can copy either DNA or RNA templates, and a ribonuclease H (RNase H) activity that cleaves the RNA strand of RNA-DNA heteroduplexes during plus-strand synthesis and hydrolyzes RNA primers. The conversion leads to a linear dsDNA copy of the retrotransposon that includes long terminal repeats (LTRs) at both ends. Its function is as follows. Integrase (IN) targets the VLP to the nucleus, where a subparticle preintegration complex (PIC) containing at least integrase and the newly synthesized dsDNA copy of the retrotransposon must transit the nuclear membrane. Once in the nucleus, integrase performs the integration of the dsDNA into the host genome. This chain is Transposon Ty1-H Gag-Pol polyprotein (TY1B-H), found in Saccharomyces cerevisiae (strain ATCC 204508 / S288c) (Baker's yeast).